A 144-amino-acid chain; its full sequence is 3-hydroxyacyl-[acyl-carrier-protein] dehydratase FabZ (144 aa).

H48 is a catalytic residue.

It belongs to the thioester dehydratase family. FabZ subfamily.

It localises to the cytoplasm. The catalysed reaction is a (3R)-hydroxyacyl-[ACP] = a (2E)-enoyl-[ACP] + H2O. Involved in unsaturated fatty acids biosynthesis. Catalyzes the dehydration of short chain beta-hydroxyacyl-ACPs and long chain saturated and unsaturated beta-hydroxyacyl-ACPs. The sequence is that of 3-hydroxyacyl-[acyl-carrier-protein] dehydratase FabZ from Listeria welshimeri serovar 6b (strain ATCC 35897 / DSM 20650 / CCUG 15529 / CIP 8149 / NCTC 11857 / SLCC 5334 / V8).